Reading from the N-terminus, the 101-residue chain is Small ribosomal subunit protein uS14 (101 aa).

The protein belongs to the universal ribosomal protein uS14 family. As to quaternary structure, part of the 30S ribosomal subunit. Contacts proteins S3 and S10.

Functionally, binds 16S rRNA, required for the assembly of 30S particles and may also be responsible for determining the conformation of the 16S rRNA at the A site. The polypeptide is Small ribosomal subunit protein uS14 (Arthrobacter sp. (strain FB24)).